The sequence spans 168 residues: S-ribosylhomocysteine lyase (168 aa).

Fe cation is bound by residues His54, His58, and Cys128.

It belongs to the LuxS family. Homodimer. Fe cation serves as cofactor.

It catalyses the reaction S-(5-deoxy-D-ribos-5-yl)-L-homocysteine = (S)-4,5-dihydroxypentane-2,3-dione + L-homocysteine. In terms of biological role, involved in the synthesis of autoinducer 2 (AI-2) which is secreted by bacteria and is used to communicate both the cell density and the metabolic potential of the environment. The regulation of gene expression in response to changes in cell density is called quorum sensing. Catalyzes the transformation of S-ribosylhomocysteine (RHC) to homocysteine (HC) and 4,5-dihydroxy-2,3-pentadione (DPD). The chain is S-ribosylhomocysteine lyase from Histophilus somni (strain 2336) (Haemophilus somnus).